A 283-amino-acid chain; its full sequence is Light-independent protochlorophyllide reductase iron-sulfur ATP-binding protein (283 aa).

ATP-binding positions include 15-20 and lysine 44; that span reads GIGKST. Position 19 (serine 19) interacts with Mg(2+). Residues cysteine 100 and cysteine 134 each coordinate [4Fe-4S] cluster. Residue 185–186 coordinates ATP; that stretch reads NR.

It belongs to the NifH/BchL/ChlL family. As to quaternary structure, homodimer. Protochlorophyllide reductase is composed of three subunits; ChlL, ChlN and ChlB. The cofactor is [4Fe-4S] cluster.

It carries out the reaction chlorophyllide a + oxidized 2[4Fe-4S]-[ferredoxin] + 2 ADP + 2 phosphate = protochlorophyllide a + reduced 2[4Fe-4S]-[ferredoxin] + 2 ATP + 2 H2O. The protein operates within porphyrin-containing compound metabolism; chlorophyll biosynthesis (light-independent). Functionally, component of the dark-operative protochlorophyllide reductase (DPOR) that uses Mg-ATP and reduced ferredoxin to reduce ring D of protochlorophyllide (Pchlide) to form chlorophyllide a (Chlide). This reaction is light-independent. The L component serves as a unique electron donor to the NB-component of the complex, and binds Mg-ATP. This is Light-independent protochlorophyllide reductase iron-sulfur ATP-binding protein from Synechococcus sp. (strain JA-3-3Ab) (Cyanobacteria bacterium Yellowstone A-Prime).